The following is a 511-amino-acid chain: Probable lipid II flippase MurJ (511 aa).

The next 11 membrane-spanning stretches (helical) occupy residues Asp25–Phe45, Ser85–Phe105, Ile133–Ser153, Tyr156–Phe178, Ile245–Ile265, Leu271–Leu291, Leu315–Val335, Leu356–Ala376, Phe400–Val420, Phe442–Val462, and Leu481–Ile501.

Belongs to the MurJ/MviN family.

The protein localises to the cell inner membrane. Its pathway is cell wall biogenesis; peptidoglycan biosynthesis. Involved in peptidoglycan biosynthesis. Transports lipid-linked peptidoglycan precursors from the inner to the outer leaflet of the cytoplasmic membrane. The protein is Probable lipid II flippase MurJ of Buchnera aphidicola subsp. Acyrthosiphon pisum (strain APS) (Acyrthosiphon pisum symbiotic bacterium).